The following is a 168-amino-acid chain: DNA damage-inducible transcript 3 protein (168 aa).

The segment at 10 to 18 (FETVSSWEL) is interaction with TRIB3. The N-terminal stretch occupies residues 10 to 26 (FETVSSWELEAWYEDLQ). Residues Ser14, Ser15, Ser30, and Ser31 each carry the phosphoserine; by CK2 modification. The interval 34–130 (IGGTYISSPG…EKEQENERKV (97 aa)) is disordered. Residues 73–88 (TSTSQSPRSPDSSQSS) show a composition bias toward low complexity. 2 positions are modified to phosphoserine; by MAPK14: Ser78 and Ser81. Residues 98–161 (QGRTRKRKQS…ETTRRALIDR (64 aa)) enclose the bZIP domain. Residues 100-129 (RTRKRKQSGQCAARAGKQRMKEKEQENERK) are basic motif. Residues 118-130 (RMKEKEQENERKV) show a composition bias toward basic and acidic residues. A leucine-zipper region spans residues 133 to 147 (LAEENERLKLEIERL).

Belongs to the bZIP family. In terms of assembly, heterodimer. Interacts with TCF7L2/TCF4, EP300/P300, HDAC1, HDAC5 and HDAC6. Interacts with TRIB3 which blocks its association with EP300/P300. Interacts with FOXO3, CEBPB and ATF4. In terms of processing, ubiquitinated, leading to its degradation by the proteasome. Post-translationally, phosphorylation at serine residues by MAPK14 enhances its transcriptional activation activity while phosphorylation at serine residues by CK2 inhibits its transcriptional activation activity.

It localises to the cytoplasm. Its subcellular location is the nucleus. In terms of biological role, multifunctional transcription factor in ER stress response. Plays an essential role in the response to a wide variety of cell stresses and induces cell cycle arrest and apoptosis in response to ER stress. Plays a dual role both as an inhibitor of CCAAT/enhancer-binding protein (C/EBP) function and as an activator of other genes. Acts as a dominant-negative regulator of C/EBP-induced transcription: dimerizes with members of the C/EBP family, impairs their association with C/EBP binding sites in the promoter regions, and inhibits the expression of C/EBP regulated genes. Positively regulates the transcription of TRIB3, IL6, IL8, IL23, TNFRSF10B/DR5, PPP1R15A/GADD34, BBC3/PUMA, BCL2L11/BIM and ERO1L. Negatively regulates; expression of BCL2 and MYOD1, ATF4-dependent transcriptional activation of asparagine synthetase (ASNS), CEBPA-dependent transcriptional activation of hepcidin (HAMP) and CEBPB-mediated expression of peroxisome proliferator-activated receptor gamma (PPARG). Inhibits the canonical Wnt signaling pathway by binding to TCF7L2/TCF4, impairing its DNA-binding properties and repressing its transcriptional activity. Plays a regulatory role in the inflammatory response through the induction of caspase-11 (CASP4/CASP11) which induces the activation of caspase-1 (CASP1) and both these caspases increase the activation of pro-IL1B to mature IL1B which is involved in the inflammatory response. Acts as a major regulator of postnatal neovascularization through regulation of endothelial nitric oxide synthase (NOS3)-related signaling. This Rattus norvegicus (Rat) protein is DNA damage-inducible transcript 3 protein (Ddit3).